Here is a 410-residue protein sequence, read N- to C-terminus: Indoleamine 2,3-dioxygenase nanC (410 aa).

Heme is bound at residue H309.

Belongs to the indoleamine 2,3-dioxygenase family. It depends on heme as a cofactor.

It catalyses the reaction D-tryptophan + O2 = N-formyl-D-kynurenine. It carries out the reaction L-tryptophan + O2 = N-formyl-L-kynurenine. The protein operates within secondary metabolite biosynthesis. Its function is as follows. Indoleamine 2,3-dioxygenase; part of the gene cluster that mediates the biosynthesis of the benzazepine alkaloid nanangelenin A which contains an unprecedented 3,4-dihydro-1-benzazepine-2,5-dione-N-prenyl-N-acetoxy-anthranilamide scaffold. The first step of nanangelenin biosynthesis is catalyzed by the indoleamine 2,3-dioxygenase nanC which produces N-formyl-kynurenine through the catabolism of tryptophan. The two-module NRPS nanA then utilizes anthranilate (Ant) and L-kynurenine (L-Kyn) to assemble the dipeptide product nanangelenin B. The first adenylation domain of nanA (A1) loads anthranilate onto the T1 domain, while A2 loads kynurenine, generated through spontaneous nonenzymatic deformylation of the nanC-supplied N-formyl-kynurenine. The peptide bond formation between the tethered amino acids is catalyzed by the first condensation domain (C1) between anthranilate's carbonyl carbon and kynurenine's aliphatic primary amine. The second C domain (C2) catalyzes the final cyclization event between the aromatic amine of kynurenine and the tethered carbonyl carbon, yielding nanangelenin B. The terminal T3 domain enhances the catalytic efficiency of C2, suggesting the T2-tethered Ant-L-Kyn is transferred to T3 prior to cyclization by C2. Once released from nanA, nanangelenin B is then prenylated by the prenyltransferase nanD to form nanangelenin C. Nanangelenin C is then N-hydroxylated by the FAD-dependent monooxygenase nanF and further acetylated by the acetyltransferase nanB to yield nanangelenin F. Finally, the N-methyltransferase nanE methylates the amide nitrogen of 1-benzazepine to convert nanangelenin F into nanangelenin A. NanE is also able to methylate most of the intermediates of the pathway such as nanangelenin B and nanangelenin C to produce nanangelenin D and nanangelenin E, respectively. The chain is Indoleamine 2,3-dioxygenase nanC from Aspergillus nanangensis.